The sequence spans 153 residues: Transcriptional repressor NrdR (153 aa).

Residues 3–34 (CPFCNNISTNVKDSRSIEDDMLIRRRRVCPVC) fold into a zinc finger. Residues 49–139 (LMVIKKNGGL…VYMNFKNIND (91 aa)) form the ATP-cone domain.

The protein belongs to the NrdR family. The cofactor is Zn(2+).

Its function is as follows. Negatively regulates transcription of bacterial ribonucleotide reductase nrd genes and operons by binding to NrdR-boxes. This chain is Transcriptional repressor NrdR, found in Ehrlichia ruminantium (strain Gardel).